A 203-amino-acid polypeptide reads, in one-letter code: Cardiotrophin-1 (203 aa).

Belongs to the IL-6 superfamily. As to expression, expressed in the ventricle and atrium of adult rats. Also detected in the lung, kidney, liver, skeletal muscle, stomach and urinary bladder. Not detected in brain, colon, testis, spleen or thymus. Overexpressed in the ventricles in the case of hypertension and hypertrophy.

It localises to the secreted. In terms of biological role, induces cardiac myocyte hypertrophy in vitro. Binds to and activates the ILST/gp130 receptor. This is Cardiotrophin-1 (Ctf1) from Rattus norvegicus (Rat).